A 317-amino-acid chain; its full sequence is Beta-ketoacyl-[acyl-carrier-protein] synthase III (317 aa).

Residues C112 and H244 contribute to the active site. The segment at 245-249 (QANIR) is ACP-binding. N274 is an active-site residue.

It belongs to the thiolase-like superfamily. FabH family. In terms of assembly, homodimer.

Its subcellular location is the cytoplasm. The enzyme catalyses malonyl-[ACP] + acetyl-CoA + H(+) = 3-oxobutanoyl-[ACP] + CO2 + CoA. The protein operates within lipid metabolism; fatty acid biosynthesis. Catalyzes the condensation reaction of fatty acid synthesis by the addition to an acyl acceptor of two carbons from malonyl-ACP. Catalyzes the first condensation reaction which initiates fatty acid synthesis and may therefore play a role in governing the total rate of fatty acid production. Possesses both acetoacetyl-ACP synthase and acetyl transacylase activities. Its substrate specificity determines the biosynthesis of branched-chain and/or straight-chain of fatty acids. In Rickettsia typhi (strain ATCC VR-144 / Wilmington), this protein is Beta-ketoacyl-[acyl-carrier-protein] synthase III.